A 145-amino-acid polypeptide reads, in one-letter code: Protein SprT-like (145 aa).

Residues 5 to 140 (DYVREVSLAD…ACGRCHGRLI (136 aa)) form the SprT-like domain. H64 contributes to the Zn(2+) binding site. Residue E65 is part of the active site. H68 contacts Zn(2+).

Belongs to the SprT family. Requires Zn(2+) as cofactor.

It is found in the cytoplasm. This is Protein SprT-like from Streptococcus equi subsp. zooepidemicus (strain MGCS10565).